Reading from the N-terminus, the 380-residue chain is Alanine racemase (380 aa).

Lys34 functions as the Proton acceptor; specific for D-alanine in the catalytic mechanism. Lys34 bears the N6-(pyridoxal phosphate)lysine mark. Arg135 is a substrate binding site. Tyr267 (proton acceptor; specific for L-alanine) is an active-site residue. Met315 is a binding site for substrate.

It belongs to the alanine racemase family. Pyridoxal 5'-phosphate is required as a cofactor.

It carries out the reaction L-alanine = D-alanine. Its pathway is amino-acid biosynthesis; D-alanine biosynthesis; D-alanine from L-alanine: step 1/1. Catalyzes the interconversion of L-alanine and D-alanine. May also act on other amino acids. This Lawsonia intracellularis (strain PHE/MN1-00) protein is Alanine racemase (alr).